The chain runs to 382 residues: Secreted RxLR effector protein 118 (382 aa).

Positions 1–21 (MRGAYYVTIALLVVASSQISA) are cleaved as a signal peptide. The short motif at 48–65 (RSLRGSRDVSNDVAIEER) is the RxLR-dEER element. Residues 308 to 382 (MNKASTSKGK…AVTSLSSISN (75 aa)) are disordered. Residues 310–323 (KASTSKGKSSVFTR) are compositionally biased toward polar residues.

It belongs to the RxLR effector family.

The protein resides in the secreted. It localises to the host nucleus. Functionally, secreted effector that completely suppresses the host cell death induced by cell death-inducing proteins. This chain is Secreted RxLR effector protein 118, found in Plasmopara viticola (Downy mildew of grapevine).